The sequence spans 477 residues: Ribulose bisphosphate carboxylase large chain (477 aa).

A propeptide spanning residues 1-2 (MS) is cleaved from the precursor. An N-acetylproline modification is found at proline 3. Residues asparagine 123 and threonine 173 each coordinate substrate. Lysine 175 (proton acceptor) is an active-site residue. Lysine 177 serves as a coordination point for substrate. Mg(2+)-binding residues include lysine 201, aspartate 203, and glutamate 204. Lysine 201 carries the N6-carboxylysine modification. The Proton acceptor role is filled by histidine 294. The substrate site is built by arginine 295, histidine 327, and serine 379.

This sequence belongs to the RuBisCO large chain family. Type I subfamily. Heterohexadecamer of 8 large chains and 8 small chains; disulfide-linked. The disulfide link is formed within the large subunit homodimers. Mg(2+) serves as cofactor. In terms of processing, the disulfide bond which can form between Cys-247 in the large chain dimeric partners within the hexadecamer appears to be associated with oxidative stress and protein turnover.

It localises to the plastid. It is found in the chloroplast. It carries out the reaction 2 (2R)-3-phosphoglycerate + 2 H(+) = D-ribulose 1,5-bisphosphate + CO2 + H2O. It catalyses the reaction D-ribulose 1,5-bisphosphate + O2 = 2-phosphoglycolate + (2R)-3-phosphoglycerate + 2 H(+). Its function is as follows. RuBisCO catalyzes two reactions: the carboxylation of D-ribulose 1,5-bisphosphate, the primary event in carbon dioxide fixation, as well as the oxidative fragmentation of the pentose substrate in the photorespiration process. Both reactions occur simultaneously and in competition at the same active site. The chain is Ribulose bisphosphate carboxylase large chain (rbcL) from Triticum aestivum (Wheat).